The sequence spans 459 residues: ATP-dependent protease ATPase subunit HslU (459 aa).

Residues valine 26, 68 to 73 (GVGKTE), aspartate 271, glutamate 337, and arginine 409 each bind ATP.

The protein belongs to the ClpX chaperone family. HslU subfamily. A double ring-shaped homohexamer of HslV is capped on each side by a ring-shaped HslU homohexamer. The assembly of the HslU/HslV complex is dependent on binding of ATP.

It is found in the cytoplasm. Its function is as follows. ATPase subunit of a proteasome-like degradation complex; this subunit has chaperone activity. The binding of ATP and its subsequent hydrolysis by HslU are essential for unfolding of protein substrates subsequently hydrolyzed by HslV. HslU recognizes the N-terminal part of its protein substrates and unfolds these before they are guided to HslV for hydrolysis. This Xylella fastidiosa (strain M12) protein is ATP-dependent protease ATPase subunit HslU.